We begin with the raw amino-acid sequence, 861 residues long: Probable beta-glucosidase A (861 aa).

A signal peptide spans 1-19; that stretch reads MKLGWIEVAALAAASVVSA. N-linked (GlcNAc...) asparagine glycans are attached at residues N62, N212, and N253. D281 is an active-site residue. 9 N-linked (GlcNAc...) asparagine glycosylation sites follow: N316, N323, N355, N443, N524, N543, N565, N669, and N713. The tract at residues 730-754 is disordered; sequence DSKYIPEGATDGSAQPRLPASGGAG. N846 carries N-linked (GlcNAc...) asparagine glycosylation.

Belongs to the glycosyl hydrolase 3 family.

The protein localises to the secreted. It carries out the reaction Hydrolysis of terminal, non-reducing beta-D-glucosyl residues with release of beta-D-glucose.. It functions in the pathway glycan metabolism; cellulose degradation. Beta-glucosidases are one of a number of cellulolytic enzymes involved in the degradation of cellulosic biomass. Catalyzes the last step releasing glucose from the inhibitory cellobiose. The chain is Probable beta-glucosidase A (bglA) from Aspergillus oryzae (strain ATCC 42149 / RIB 40) (Yellow koji mold).